A 197-amino-acid chain; its full sequence is RNA pyrophosphohydrolase (197 aa).

One can recognise a Nudix hydrolase domain in the interval 6 to 154; that stretch reads GYRPNVGIVL…KREVYQLALS (149 aa). A Nudix box motif is present at residues 38–59; that stretch reads GGIQHGESPEQAMYRELHEEVG.

The protein belongs to the Nudix hydrolase family. RppH subfamily. A divalent metal cation serves as cofactor.

Accelerates the degradation of transcripts by removing pyrophosphate from the 5'-end of triphosphorylated RNA, leading to a more labile monophosphorylated state that can stimulate subsequent ribonuclease cleavage. This is RNA pyrophosphohydrolase from Polynucleobacter necessarius subsp. necessarius (strain STIR1).